The sequence spans 187 residues: Large ribosomal subunit protein uL22 (187 aa).

Positions 159–171 are enriched in basic and acidic residues; that stretch reads VSKPTDDAAPKVK. A disordered region spans residues 159 to 187; sequence VSKPTDDAAPKVKKESKRKQRRQLARGEF. Over residues 172–187 the composition is skewed to basic residues; that stretch reads KESKRKQRRQLARGEF.

The protein belongs to the universal ribosomal protein uL22 family.

The chain is Large ribosomal subunit protein uL22 (rpl-17) from Caenorhabditis elegans.